A 218-amino-acid chain; its full sequence is Large ribosomal subunit protein uL3 (218 aa).

A disordered region spans residues 133 to 158 (RGQGASHGAQAVHRRPGSIGGCATPG).

Belongs to the universal ribosomal protein uL3 family. Part of the 50S ribosomal subunit. Forms a cluster with proteins L14 and L19.

Functionally, one of the primary rRNA binding proteins, it binds directly near the 3'-end of the 23S rRNA, where it nucleates assembly of the 50S subunit. This is Large ribosomal subunit protein uL3 from Mycolicibacterium vanbaalenii (strain DSM 7251 / JCM 13017 / BCRC 16820 / KCTC 9966 / NRRL B-24157 / PYR-1) (Mycobacterium vanbaalenii).